We begin with the raw amino-acid sequence, 220 residues long: Glycerol-3-phosphate acyltransferase (220 aa).

The next 6 helical transmembrane spans lie at 11 to 31 (INVI…GYAL), 70 to 90 (LLIL…SKLF), 96 to 116 (LQWM…FLNF), 127 to 147 (GSVV…WFFV), 153 to 173 (ISSL…FFVP), and 193 to 213 (MVLI…NLLA).

It belongs to the PlsY family. As to quaternary structure, probably interacts with PlsX.

The protein localises to the cell inner membrane. It catalyses the reaction an acyl phosphate + sn-glycerol 3-phosphate = a 1-acyl-sn-glycero-3-phosphate + phosphate. Its pathway is lipid metabolism; phospholipid metabolism. Its function is as follows. Catalyzes the transfer of an acyl group from acyl-phosphate (acyl-PO(4)) to glycerol-3-phosphate (G3P) to form lysophosphatidic acid (LPA). This enzyme utilizes acyl-phosphate as fatty acyl donor, but not acyl-CoA or acyl-ACP. The polypeptide is Glycerol-3-phosphate acyltransferase (Helicobacter acinonychis (strain Sheeba)).